Consider the following 198-residue polypeptide: Dynactin subunit 5 (198 aa).

Polar residues predominate over residues 179–188; the sequence is NTPASKGLPS. Residues 179 to 198 form a disordered region; it reads NTPASKGLPSTPTKLQTTTT. The span at 189 to 198 shows a compositional bias: low complexity; sequence TPTKLQTTTT.

Belongs to the dynactin subunits 5/6 family. Dynactin subunit 5 subfamily. Member of the pointed-end complex of the dynactin shoulder complex.

Its subcellular location is the cytoplasm. The protein resides in the cytoskeleton. The sequence is that of Dynactin subunit 5 (dynE) from Dictyostelium discoideum (Social amoeba).